We begin with the raw amino-acid sequence, 893 residues long: Protein kintoun (893 aa).

5 disordered regions span residues 211–243, 372–395, 587–719, 781–821, and 834–893; these read KNATAEEREPHPLEHTYPKKPEANAGKPKVLPM, LSREDSGVELNSNSESPAEDEEAG, EQVH…SIDD, QRKK…QQTA, and PQNN…DEDM. A compositionally biased stretch (basic and acidic residues) spans 214-232; the sequence is TAEEREPHPLEHTYPKKPE. Phosphoserine is present on Ser-377. Residues 594 to 603 show a composition bias toward acidic residues; the sequence is QQEEEEEEEQ. The span at 609–626 shows a compositional bias: basic residues; sequence HQHKKGNKKQRKRNKKQR. Residues 640-651 are compositionally biased toward low complexity; the sequence is QQQQHQKQQQQQ. Polar residues-rich tracts occupy residues 656–667 and 684–694; these read ENSSPESLNAGS and FSECNDSSSVQ. Over residues 709–719 the composition is skewed to low complexity; it reads SISESSSSIDD. The span at 781–797 shows a compositional bias: basic residues; it reads QRKKNQKRRDCKLRAQQ. At Ser-801 the chain carries Phosphoserine. Low complexity predominate over residues 836-848; sequence NNNNRSYSKNNKN. The span at 865 to 877 shows a compositional bias: basic and acidic residues; that stretch reads NNEEDTKRNEADA. Over residues 884–893 the composition is skewed to acidic residues; the sequence is EMDDDDDEDM.

The protein belongs to the PIH1 family. Kintoun subfamily. As to quaternary structure, interacts with Pp1alpha-96A, Pp1-87B, Pp1-13C and flw.

It localises to the cytoplasm. Its function is as follows. Required for cytoplasmic pre-assembly of axonemal dyneins, thereby playing a central role in motility in cilia and flagella. Involved in pre-assembly of dynein arm complexes in the cytoplasm before intraflagellar transport loads them for the ciliary compartment. The polypeptide is Protein kintoun (Drosophila grimshawi (Hawaiian fruit fly)).